The primary structure comprises 45 residues: Large ribosomal subunit protein bL34 (45 aa).

The tract at residues 26–45 (RAGRSILSARRSKGRSQLSA) is disordered.

The protein belongs to the bacterial ribosomal protein bL34 family.

The chain is Large ribosomal subunit protein bL34 from Parafrankia sp. (strain EAN1pec).